The following is a 90-amino-acid chain: Interferon alpha-inducible protein 27-like protein 2A (90 aa).

An N-terminal signal peptide occupies residues 1–24 (MLGTLFGSAIGGALAVAGAPVALA). The next 2 helical transmembrane spans lie at 28-48 (FTGT…AAAI) and 67-89 (GVLG…VGAL).

Belongs to the IFI6/IFI27 family. Homodimer. Interacts with SKP2. Interacts with NR4A1. May interact with BCL2.

It localises to the nucleus inner membrane. Its function is as follows. May be involved in the interferon-induced negative regulation of the transcriptional activity of NR4A1, NR4A2 and NR4A3 through the enhancement of XPO1-mediated nuclear export of these nuclear receptors. Through the regulation of NR4A1 transcriptional activity, may play a role in the vascular response to injury. This chain is Interferon alpha-inducible protein 27-like protein 2A, found in Mus musculus (Mouse).